Consider the following 332-residue polypeptide: Beta-ketoacyl-[acyl-carrier-protein] synthase III 2 (332 aa).

Active-site residues include Cys115 and His252. The segment at 253-257 is ACP-binding; the sequence is SANLR. Asn282 is an active-site residue.

This sequence belongs to the thiolase-like superfamily. FabH family. In terms of assembly, homodimer.

The protein localises to the cytoplasm. The enzyme catalyses malonyl-[ACP] + acetyl-CoA + H(+) = 3-oxobutanoyl-[ACP] + CO2 + CoA. It participates in lipid metabolism; fatty acid biosynthesis. Catalyzes the condensation reaction of fatty acid synthesis by the addition to an acyl acceptor of two carbons from malonyl-ACP. Catalyzes the first condensation reaction which initiates fatty acid synthesis and may therefore play a role in governing the total rate of fatty acid production. Possesses both acetoacetyl-ACP synthase and acetyl transacylase activities. Its substrate specificity determines the biosynthesis of branched-chain and/or straight-chain of fatty acids. The polypeptide is Beta-ketoacyl-[acyl-carrier-protein] synthase III 2 (Halalkalibacterium halodurans (strain ATCC BAA-125 / DSM 18197 / FERM 7344 / JCM 9153 / C-125) (Bacillus halodurans)).